The primary structure comprises 77 residues: Translation initiation factor IF-1, chloroplastic (77 aa).

The S1-like domain occupies 1–71 (MKEQKWIHEG…TRGRIIYRLR (71 aa)).

This sequence belongs to the IF-1 family. In terms of assembly, component of the 30S ribosomal translation pre-initiation complex which assembles on the 30S ribosome in the order IF-2 and IF-3, IF-1 and N-formylmethionyl-tRNA(fMet); mRNA recruitment can occur at any time during PIC assembly.

The protein localises to the plastid. It localises to the chloroplast. In terms of biological role, one of the essential components for the initiation of protein synthesis. Stabilizes the binding of IF-2 and IF-3 on the 30S subunit to which N-formylmethionyl-tRNA(fMet) subsequently binds. Helps modulate mRNA selection, yielding the 30S pre-initiation complex (PIC). Upon addition of the 50S ribosomal subunit IF-1, IF-2 and IF-3 are released leaving the mature 70S translation initiation complex. The protein is Translation initiation factor IF-1, chloroplastic of Garrya elliptica (Wavyleaf silktassel).